The chain runs to 1827 residues: Chromodomain-helicase-DNA-binding protein 2 (1827 aa).

Basic and acidic residues predominate over residues 1 to 14 (MMRNKDKSQEEDSS). The segment at 1–264 (MMRNKDKSQE…EQQDNSETIE (264 aa)) is disordered. A compositionally biased stretch (low complexity) spans 15–75 (LHSNASSRSA…SESESAGSKS (61 aa)). 3 stretches are compositionally biased toward basic and acidic residues: residues 81 to 101 (EAKE…KMWE), 115 to 128 (SRQE…KEEA), and 146 to 155 (KKQEKWKQDP). Positions 175-204 (GKARRPVPRRTVPKPQVKKQPKIQRGKRKK) are enriched in basic residues. A phosphoserine mark is found at Ser207 and Ser208. A compositionally biased stretch (acidic residues) spans 234 to 258 (EDDDFETDSDDLIEMTGEGGDEQQD). Thr240 carries the phosphothreonine modification. At Ser242 the chain carries Phosphoserine. 2 consecutive Chromo domains span residues 261–353 (ETIE…QWLG) and 378–456 (QIVE…IPTR). The 171-residue stretch at 496–666 (AHSWCKSNSV…WSLLHFIMPE (171 aa)) folds into the Helicase ATP-binding domain. 509-516 (DEMGLGKT) lines the ATP pocket. Residues 617 to 620 (DEAH) carry the DEAH box motif. The region spanning 795–946 (LLDKLLTRLR…HLVIQRMDTT (152 aa)) is the Helicase C-terminal domain. Disordered stretches follow at residues 1030–1124 (EDEE…RSVR), 1329–1465 (GTVA…DDLD), 1556–1638 (HKKR…ADRG), and 1679–1827 (HMDA…VRKT). The span at 1037–1065 (ERPHKDWDEIIPEEQRKKVEEEERQKELE) shows a compositional bias: basic and acidic residues. Residues Ser1085, Ser1087, Ser1365, and Ser1386 each carry the phosphoserine modification. Basic and acidic residues predominate over residues 1347-1371 (KKENKAPRLKDEHGLEPASPRHSDN). 2 stretches are compositionally biased toward basic and acidic residues: residues 1396-1431 (ENKE…KGGD) and 1565-1574 (EQKKKDDSLG). The tract at residues 1464 to 1566 (LDQETFSICK…KKRSQEEEEQ (103 aa)) is CHD1 helical C-terminal domain (CHCT). Over residues 1584–1601 (SGSSRDSLISQSHTSHNL) the composition is skewed to polar residues. Composition is skewed to basic and acidic residues over residues 1697–1719 (RPYE…DRHH), 1738–1748 (QDFRRMSDHRP), 1759–1771 (DHYR…KLGE), and 1794–1813 (SPHD…RSLE). Position 1806 is a phosphoserine (Ser1806).

In terms of assembly, interacts with MYOD1. Interacts with histone H3.3. Widely expressed.

The protein resides in the nucleus. It carries out the reaction ATP + H2O = ADP + phosphate + H(+). Functionally, ATP-dependent chromatin-remodeling factor that specifically binds to the promoter of target genes, leading to chromatin remodeling, possibly by promoting deposition of histone H3.3. Involved in myogenesis via interaction with MYOD1: binds to myogenic gene regulatory sequences and mediates incorporation of histone H3.3 prior to the onset of myogenic gene expression, promoting their expression. This chain is Chromodomain-helicase-DNA-binding protein 2 (Chd2), found in Mus musculus (Mouse).